A 321-amino-acid polypeptide reads, in one-letter code: Putative pyridoxal kinase (321 aa).

The substrate site is built by Ser23 and Tyr144. ATP is bound by residues 203 to 204 (TS) and 230 to 242 (TFPR…VGTG). Position 243 (Asp243) interacts with substrate.

This sequence belongs to the pyridoxine kinase family. Requires Zn(2+) as cofactor. The cofactor is Mg(2+).

It carries out the reaction pyridoxal + ATP = pyridoxal 5'-phosphate + ADP + H(+). Functionally, required for synthesis of pyridoxal-5-phosphate from vitamin B6. The chain is Putative pyridoxal kinase from Caenorhabditis elegans.